A 316-amino-acid polypeptide reads, in one-letter code: Porphobilinogen deaminase (316 aa).

S-(dipyrrolylmethanemethyl)cysteine is present on C245.

The protein belongs to the HMBS family. Monomer. Requires dipyrromethane as cofactor.

The catalysed reaction is 4 porphobilinogen + H2O = hydroxymethylbilane + 4 NH4(+). It participates in porphyrin-containing compound metabolism; protoporphyrin-IX biosynthesis; coproporphyrinogen-III from 5-aminolevulinate: step 2/4. It functions in the pathway porphyrin-containing compound metabolism; chlorophyll biosynthesis. Tetrapolymerization of the monopyrrole PBG into the hydroxymethylbilane pre-uroporphyrinogen in several discrete steps. The polypeptide is Porphobilinogen deaminase (Prochlorococcus marinus (strain MIT 9312)).